A 354-amino-acid chain; its full sequence is Rhodopsin (354 aa).

Residues methionine 1–alanine 36 lie on the Extracellular side of the membrane. N-linked (GlcNAc...) asparagine glycans are attached at residues asparagine 2 and asparagine 15. A helical transmembrane segment spans residues tyrosine 37–valine 61. Residues threonine 62–asparagine 73 are Cytoplasmic-facing. A helical transmembrane segment spans residues tyrosine 74–tyrosine 96. Residues threonine 97–cysteine 110 lie on the Extracellular side of the membrane. Cysteines 110 and 187 form a disulfide. Residues asparagine 111–isoleucine 133 form a helical membrane-spanning segment. Residues glutamate 134 to tryptophan 136 carry the 'Ionic lock' involved in activated form stabilization motif. Over glutamate 134–histidine 152 the chain is Cytoplasmic. Residues alanine 153–valine 173 form a helical membrane-spanning segment. Residues glycine 174–serine 202 lie on the Extracellular side of the membrane. An N-linked (GlcNAc...) asparagine glycan is attached at asparagine 200. A helical membrane pass occupies residues phenylalanine 203–glycine 224. The Cytoplasmic segment spans residues arginine 225–arginine 252. A helical transmembrane segment spans residues methionine 253–tyrosine 274. Over isoleucine 275–leucine 286 the chain is Extracellular. A helical membrane pass occupies residues phenylalanine 287 to cysteine 308. Lysine 296 is modified (N6-(retinylidene)lysine). Topologically, residues methionine 309–alanine 354 are cytoplasmic. 2 S-palmitoyl cysteine lipidation sites follow: cysteine 322 and cysteine 323. Residues glycine 333–alanine 354 are disordered. Positions alanine 334 to alanine 354 are enriched in low complexity.

It belongs to the G-protein coupled receptor 1 family. Opsin subfamily. Phosphorylated on some or all of the serine and threonine residues present in the C-terminal region. Post-translationally, contains one covalently linked retinal chromophore.

It is found in the membrane. The protein resides in the cell projection. It localises to the cilium. Its subcellular location is the photoreceptor outer segment. In terms of biological role, photoreceptor required for image-forming vision at low light intensity. While most salt water fish species use retinal as chromophore, most freshwater fish use 3-dehydroretinal, or a mixture of retinal and 3-dehydroretinal. Light-induced isomerization of 11-cis to all-trans retinal triggers a conformational change that activates signaling via G-proteins. Subsequent receptor phosphorylation mediates displacement of the bound G-protein alpha subunit by arrestin and terminates signaling. The sequence is that of Rhodopsin (rho) from Salaria pavo (Peacock blenny).